We begin with the raw amino-acid sequence, 254 residues long: MIMASSAAASISMITLRNLSRNHQSHQSTFLGFSRSFHNQRISSNSPGLSTRARSTTSSTGGFFRTICSSSSNDYSRPTKIQELNVYEFNEGDRNSPAVLKLGKKPDQLCLGDLVPFTNKLYTGDLTKRIGITAGLCVLIQHVPEKKGDRFEASYSFYFGDYGHISVQGPYLTYEDTFLAITGGSGVFEGAYGQVKLRQLVYPTKLFYTFYLKGVAADLPVELTGKHVEPSKEVKPAAEAQATQPGATIANFTN.

A chloroplast-targeting transit peptide spans 1–52 (MIMASSAAASISMITLRNLSRNHQSHQSTFLGFSRSFHNQRISSNSPGLSTR).

The protein belongs to the allene oxide cyclase family. As to expression, highly expressed in fully developed leaves.

It is found in the plastid. It localises to the chloroplast. It catalyses the reaction (9Z,13S,15Z)-12,13-epoxyoctadeca-9,11,15-trienoate = (9S,13S,15Z)-12-oxophyto-10,15-dienoate. Functionally, involved in the production of 12-oxo-phytodienoic acid (OPDA), a precursor of jasmonic acid. The sequence is that of Allene oxide cyclase 4, chloroplastic (AOC4) from Arabidopsis thaliana (Mouse-ear cress).